The sequence spans 290 residues: Translin-associated protein X (290 aa).

The tract at residues 1 to 32 is disordered; the sequence is MSNKEGSGGFRKRKHDNFPHNQRREGKDVNSS. Basic and acidic residues predominate over residues 16–28; that stretch reads DNFPHNQRREGKD. An interaction with C1D region spans residues 73–208; it reads LLHRITSAPD…MRMCINSVGN (136 aa). Positions 129 and 197 each coordinate Mg(2+). Lys-279 participates in a covalent cross-link: Glycyl lysine isopeptide (Lys-Gly) (interchain with G-Cter in SUMO2).

The protein belongs to the translin family. As to quaternary structure, ring-shaped heterooctamer of six TSN and two TSNAX subunits. Interacts with GOLGA3, TSNAXIP1, SUN1 and AKAP9. Interacts with the homodimeric form of C1D following gamma-radiation. Interacts with TSN and C1D in a mutually exclusive manner. Post-translationally, sumoylated with SUMO1.

The protein resides in the cytoplasm. It is found in the perinuclear region. The protein localises to the golgi apparatus. It localises to the nucleus. Acts in combination with TSN as an endonuclease involved in the activation of the RNA-induced silencing complex (RISC). Possible role in spermatogenesis. This is Translin-associated protein X (TSNAX) from Pongo abelii (Sumatran orangutan).